The sequence spans 378 residues: MSQSISAQSGYTLPVFACASAIAAVETLLTSNCPDSVTLELLEPARTAEIAIEQGALLGHHRALAITRSEPGNNLDLTRHTPVWAEVEFTPGEGKLIIQGGEGIGKQLDREGQAAIYSYAQRLLRHHLQPYISGDQTLMVSLILPLGRTLATRTSNAAFGVVEGLSLLGTSGIAQPLSAPEQLAEFQQHLTSAAQQHQCLVFCLGENGLDLARQWGVPLDQMVKTANWLGSLFVAAAAVGVQEILLLGYHGKLIKLAGGIFHTHHHLADGRLEILTAQAVQAGLPYPLVQELGQAPTTEAGLKLLRHWQTEQNCPWVSKIYQAMADTVDRRSEEYVYKVSQHQLKVGSLLFDGDRQPVAISTQGQAMADKLGMTIPET.

Belongs to the CbiD family.

The catalysed reaction is Co-precorrin-5B + S-adenosyl-L-methionine = Co-precorrin-6A + S-adenosyl-L-homocysteine. The protein operates within cofactor biosynthesis; adenosylcobalamin biosynthesis; cob(II)yrinate a,c-diamide from sirohydrochlorin (anaerobic route): step 6/10. In terms of biological role, catalyzes the methylation of C-1 in cobalt-precorrin-5B to form cobalt-precorrin-6A. This is Cobalt-precorrin-5B C(1)-methyltransferase from Synechocystis sp. (strain ATCC 27184 / PCC 6803 / Kazusa).